The primary structure comprises 526 residues: Cytochrome P450 monooxygenase milC (526 aa).

Residues 2-20 (AIHAAYIFIAATLIALYVA) form a helical membrane-spanning segment. Heme is bound at residue cysteine 470.

Belongs to the cytochrome P450 family. Requires heme as cofactor.

It localises to the membrane. The catalysed reaction is cordypyrone A + reduced [NADPH--hemoprotein reductase] + O2 = cordypyrone B + oxidized [NADPH--hemoprotein reductase] + H2O + H(+). Its pathway is secondary metabolite biosynthesis. In terms of biological role, cytochrome P450 monooxygenase; part of the gene cluster that mediates the biosynthesis of cordypyrones A and B, 2 pyrones that show modest activities against pathogenic bacteria including methicillin-resistant Staphylococcus aureus (MRSA), Mycobacterium tuberculosis and Bacillus cereus. The HR-PKS milA catalyzes the formation of cordypyrones A via condensation of one acetate with 10 malonate units. Since milA lacks an enoyl reductase domain, the 2 beta-keto processing domains DH and KR of milA collaborate with the trans-enoyl reductase milB to catalyze the different levels of reduction. The cytochrome P450 monooxygenase milC then hydroxylates the C-22 of cordypyrones A to yield cordypyrones B. This chain is Cytochrome P450 monooxygenase milC, found in Cordyceps militaris (strain CM01) (Caterpillar fungus).